The primary structure comprises 119 residues: Large ribosomal subunit protein uL22 (119 aa).

This sequence belongs to the universal ribosomal protein uL22 family. As to quaternary structure, part of the 50S ribosomal subunit.

This protein binds specifically to 23S rRNA; its binding is stimulated by other ribosomal proteins, e.g. L4, L17, and L20. It is important during the early stages of 50S assembly. It makes multiple contacts with different domains of the 23S rRNA in the assembled 50S subunit and ribosome. Functionally, the globular domain of the protein is located near the polypeptide exit tunnel on the outside of the subunit, while an extended beta-hairpin is found that lines the wall of the exit tunnel in the center of the 70S ribosome. This chain is Large ribosomal subunit protein uL22, found in Bifidobacterium adolescentis (strain ATCC 15703 / DSM 20083 / NCTC 11814 / E194a).